We begin with the raw amino-acid sequence, 157 residues long: MVVRLPYVKGSILCSALAKGCGHNYYGEPAWPNDILYIFPVVILGTISFSLGLGVIENQAIGEPANPFATPLEILPEWYFFPTFNLLRILPDKLVGVLSLASVPVILVLTAFIENINRYQNPFRRPVASLVYLTSTCYALWLGYGSVLGISEALPFV.

Transmembrane regions (helical) follow at residues Ile35–Val55, Leu94–Glu114, and Leu130–Ile150.

The protein belongs to the cytochrome b family. PetD subfamily. As to quaternary structure, the 4 large subunits of the cytochrome b6-f complex are cytochrome b6, subunit IV (17 kDa polypeptide, petD), cytochrome f and the Rieske protein, while the 4 small subunits are petG, petL, petM and petN. The complex functions as a dimer.

The protein resides in the plastid. It is found in the chloroplast thylakoid membrane. Functionally, component of the cytochrome b6-f complex, which mediates electron transfer between photosystem II (PSII) and photosystem I (PSI), cyclic electron flow around PSI, and state transitions. In Amphidinium carterae (Dinoflagellate), this protein is Cytochrome b6-f complex subunit 4.